The sequence spans 467 residues: Glutamyl-tRNA reductase (467 aa).

Substrate-binding positions include 49–52 (TCNR), Ser109, 114–116 (EQQ), and Gln120. Catalysis depends on Cys50, which acts as the Nucleophile. 189–194 (GAGAMG) lines the NADP(+) pocket. The segment at 446–467 (GFSDTTRYGTSPAQSSSKYHAE) is disordered. Residues 447 to 467 (FSDTTRYGTSPAQSSSKYHAE) show a composition bias toward polar residues.

It belongs to the glutamyl-tRNA reductase family. In terms of assembly, homodimer.

It catalyses the reaction (S)-4-amino-5-oxopentanoate + tRNA(Glu) + NADP(+) = L-glutamyl-tRNA(Glu) + NADPH + H(+). The protein operates within porphyrin-containing compound metabolism; protoporphyrin-IX biosynthesis; 5-aminolevulinate from L-glutamyl-tRNA(Glu): step 1/2. Functionally, catalyzes the NADPH-dependent reduction of glutamyl-tRNA(Glu) to glutamate 1-semialdehyde (GSA). In Mycobacterium leprae (strain TN), this protein is Glutamyl-tRNA reductase.